A 164-amino-acid polypeptide reads, in one-letter code: Large ribosomal subunit protein eL21x/eL21w (164 aa).

The protein belongs to the eukaryotic ribosomal protein eL21 family.

This chain is Large ribosomal subunit protein eL21x/eL21w (RPL21E), found in Arabidopsis thaliana (Mouse-ear cress).